Consider the following 452-residue polypeptide: Ethanolamine kinase 1 (452 aa).

The disordered stretch occupies residues 26–64 (AVQTRIGNSAASRRSPAARPPVPAPPALPRGRPGTEGST). Over residues 43–53 (ARPPVPAPPAL) the composition is skewed to pro residues.

The protein belongs to the choline/ethanolamine kinase family. Expressed in kidney, liver, placenta, heart, leukocyte, ovary and testis.

The protein localises to the cytoplasm. The enzyme catalyses ethanolamine + ATP = phosphoethanolamine + ADP + H(+). It participates in phospholipid metabolism; phosphatidylethanolamine biosynthesis; phosphatidylethanolamine from ethanolamine: step 1/3. Highly specific for ethanolamine phosphorylation. May be a rate-controlling step in phosphatidylethanolamine biosynthesis. In Homo sapiens (Human), this protein is Ethanolamine kinase 1.